Here is a 158-residue protein sequence, read N- to C-terminus: Transcription elongation factor GreA (158 aa).

Residues Ala47–Asp74 are a coiled coil.

Belongs to the GreA/GreB family.

Its function is as follows. Necessary for efficient RNA polymerase transcription elongation past template-encoded arresting sites. The arresting sites in DNA have the property of trapping a certain fraction of elongating RNA polymerases that pass through, resulting in locked ternary complexes. Cleavage of the nascent transcript by cleavage factors such as GreA or GreB allows the resumption of elongation from the new 3'terminus. GreA releases sequences of 2 to 3 nucleotides. The chain is Transcription elongation factor GreA from Bradyrhizobium sp. (strain BTAi1 / ATCC BAA-1182).